The chain runs to 153 residues: MADWFHSALKTCTHVCDFSDIKASSQQDFFCCDSMRGKLSEPRKVLLVSCFVSFTGSFYGSNRNVRGQVQLGMQQDDGVVRPIGYIPIGGYLYHDDYGYYQGEKTFNLDIESDYLKPDEDFWKRFTINIVNDKGLDDRCDVKCYVVHTMRIKV.

This sequence belongs to the nanoviridae nuclear shuttle protein family.

It is found in the host nucleus. The protein localises to the host cytoplasm. In terms of biological role, putative nuclear shuttle protein. The polypeptide is Putative nuclear shuttle protein (DNA-N) (Trifolium subterraneum (Subterranean clover)).